Reading from the N-terminus, the 95-residue chain is Large ribosomal subunit protein bL25 (95 aa).

This sequence belongs to the bacterial ribosomal protein bL25 family. In terms of assembly, part of the 50S ribosomal subunit; part of the 5S rRNA/L5/L18/L25 subcomplex. Contacts the 5S rRNA. Binds to the 5S rRNA independently of L5 and L18.

In terms of biological role, this is one of the proteins that binds to the 5S RNA in the ribosome where it forms part of the central protuberance. The chain is Large ribosomal subunit protein bL25 from Aeromonas salmonicida (strain A449).